The sequence spans 260 residues: 3'-5' ssDNA/RNA exonuclease TatD (260 aa).

E91, H127, and H152 together coordinate a divalent metal cation.

Belongs to the metallo-dependent hydrolases superfamily. TatD-type hydrolase family. TatD subfamily. Monomer. It depends on Mg(2+) as a cofactor.

The protein localises to the cytoplasm. 3'-5' exonuclease that prefers single-stranded DNA and RNA. May play a role in the H(2)O(2)-induced DNA damage repair. This chain is 3'-5' ssDNA/RNA exonuclease TatD, found in Shigella flexneri serotype 5b (strain 8401).